Reading from the N-terminus, the 323-residue chain is Serine/threonine-protein phosphatase PP1-gamma catalytic subunit (323 aa).

Residue Ala2 is modified to N-acetylalanine. Residues Asp64, His66, Asp92, and Asn124 each coordinate Mn(2+). The active-site Proton donor is the His125. Residues His173 and His248 each contribute to the Mn(2+) site. A disordered region spans residues 302-323 (KKPNATRPVTPPRGMITKQAKK). Phosphothreonine occurs at positions 307 and 311.

The protein belongs to the PPP phosphatase family. PP-1 subfamily. In terms of assembly, PP1 comprises a catalytic subunit, PPP1CA, PPP1CB or PPP1CC, which is folded into its native form by inhibitor 2 and glycogen synthetase kinase 3, and then complexed to one or several targeting or regulatory subunits. PPP1R12A, PPP1R12B and PPP1R12C mediate binding to myosin. PPP1R3A (in skeletal muscle), PPP1R3B (in liver), PPP1R3C, PPP1R3D and PPP1R3F (in brain) mediate binding to glycogen. Interacts with cyanobacterial toxin microcystin; disulfide-linked. Interacts with PPP1R3B and PPP1R7. Isoform 2 interacts with SPZ1. Interacts with CDCA2. PPP1R15A and PPP1R15B mediate binding to EIF2S1. Part of a complex containing PPP1R15B, PP1 and NCK1/2. Interacts with IKFZ1; the interaction targets PPP1CC to pericentromeric heterochromatin, dephosphorylates IKAROS, stabilizes it and prevents it from degradation. Interacts with PPP1R42; the interaction is direct. Interacts with NOM1 and PPP1R8. Component of the PTW/PP1 phosphatase complex, composed of PPP1R10/PNUTS, TOX4, WDR82, and PPP1CA or PPP1CB or PPP1CC. Interacts with PPP1R8. Interacts with isoform 1 and isoform 4 NEK2. Interacts with URI1; the interaction is phosphorylation-dependent and occurs in a growth factor-dependent manner. Interacts with FOXP3. Interacts with TMEM225 (via RVxF motif). Interacts with MKI67. Interacts with RRP1B; this targets PPP1CC to the nucleolus. Interacts with PPP1R2B. Found in a complex with PPP1CA, PPP1CC, SHC1 and PEAK1. Interacts with DYNLT4. Interacts (via RVxF motif) with FIRRM; regulates PLK1 kinase activity. Interacts with the KNL1 complex subunit KNL1; the interaction is direct and mutually exclusive with KNL1 binding to microtubules. Component of the SHOC2-MRAS-PP1c (SMP) complex consisting of SHOC2, GTP-bound M-Ras/MRAS and the catalytic subunit of protein phosphatase 1 (either PPP1CA, PPP1CB or PPP1CC). SHOC2 and PP1c preferably bind M-Ras/MRAS, but they also bind K-Ras/KRAS, N-Ras/NRAS and H-Ras/HRAS; these interactions are GTP-dependent and both SHOC2 and PP1c are required to form a stable complex. Interacts with SHOC2 in the absence of Ras GTPases. Mn(2+) is required as a cofactor. Post-translationally, phosphorylated by NEK2.

It localises to the cytoplasm. It is found in the nucleus. The protein localises to the nucleolus. The protein resides in the nucleoplasm. Its subcellular location is the nucleus speckle. It localises to the chromosome. It is found in the centromere. The protein localises to the kinetochore. The protein resides in the cleavage furrow. Its subcellular location is the midbody. It localises to the mitochondrion. It is found in the cytoskeleton. The protein localises to the microtubule organizing center. The enzyme catalyses O-phospho-L-seryl-[protein] + H2O = L-seryl-[protein] + phosphate. It catalyses the reaction O-phospho-L-threonyl-[protein] + H2O = L-threonyl-[protein] + phosphate. Inactivated by binding to URI1. The phosphatase activity of the PPP1R15A-PP1 complex toward EIF2S1 is specifically inhibited by Salubrinal, a drug that protects cells from endoplasmic reticulum stress. Protein phosphatase that associates with over 200 regulatory proteins to form highly specific holoenzymes which dephosphorylate hundreds of biological targets. Protein phosphatase 1 (PP1) is essential for cell division, and participates in the regulation of glycogen metabolism, muscle contractility and protein synthesis. Dephosphorylates RPS6KB1. Involved in regulation of ionic conductances and long-term synaptic plasticity. May play an important role in dephosphorylating substrates such as the postsynaptic density-associated Ca(2+)/calmodulin dependent protein kinase II. Component of the PTW/PP1 phosphatase complex, which plays a role in the control of chromatin structure and cell cycle progression during the transition from mitosis into interphase. In balance with CSNK1D and CSNK1E, determines the circadian period length, through the regulation of the speed and rhythmicity of PER1 and PER2 phosphorylation. May dephosphorylate CSNK1D and CSNK1E. Regulates the recruitment of the SKA complex to kinetochores. Dephosphorylates the 'Ser-418' residue of FOXP3 in regulatory T-cells (Treg) from patients with rheumatoid arthritis, thereby inactivating FOXP3 and rendering Treg cells functionally defective. Together with PPP1CA (PP1-alpha subunit), dephosphorylates IFIH1/MDA5 and RIG-I leading to their activation and a functional innate immune response. Core component of the SHOC2-MRAS-PP1c (SMP) holophosphatase complex that regulates the MAPK pathway activation. The SMP complex specifically dephosphorylates the inhibitory phosphorylation at 'Ser-259' of RAF1 kinase, 'Ser-365' of BRAF kinase and 'Ser-214' of ARAF kinase, stimulating their kinase activities. Dephosphorylates MKI67 at the onset of anaphase. The SMP complex enhances the dephosphorylation activity and substrate specificity of PP1c. The chain is Serine/threonine-protein phosphatase PP1-gamma catalytic subunit (PPP1CC) from Homo sapiens (Human).